The chain runs to 160 residues: E3 ubiquitin ligase complex SCF subunit sconC (160 aa).

Residues 101 to 160 (ILAANYLDIKALLDVGCKTVANMIKGKSPEEIRKTFNIQNDFTPEEEDQIRRENEWAEDR) are interaction with the F-box domain of F-box proteins.

Belongs to the SKP1 family. In terms of assembly, component of the SCF (SKP1-CUL1-F-box protein) E3 ubiquitin ligase complexes.

Its pathway is protein modification; protein ubiquitination. Its function is as follows. Essential component of the SCF (SKP1-CUL1-F-box protein) E3 ubiquitin ligase complexes, which mediate the ubiquitination and subsequent proteasomal degradation of target proteins. Controls sulfur metabolite repression, probably by mediating the inactivation or degradation of the metR transcription factor. The polypeptide is E3 ubiquitin ligase complex SCF subunit sconC (sconC) (Talaromyces stipitatus (strain ATCC 10500 / CBS 375.48 / QM 6759 / NRRL 1006) (Penicillium stipitatum)).